The sequence spans 359 residues: Phosphatidylglycerol--prolipoprotein diacylglyceryl transferase (359 aa).

A run of 4 helical transmembrane segments spans residues 24 to 44, 58 to 78, 98 to 118, and 124 to 144; these read VALR…IVWG, VLDI…LYHV, VWQG…GAWI, and GIPL…AQAI. Residue Arg146 coordinates a 1,2-diacyl-sn-glycero-3-phospho-(1'-sn-glycerol). 3 helical membrane-spanning segments follow: residues 193-213, 222-243, and 258-278; these read FVVH…VLLL, IGHG…FWIE, and VNSF…FAAT. The segment at 284–359 is disordered; that stretch reads PAELRPADGG…IDSKKDDAND (76 aa). Over residues 306 to 323 the composition is skewed to basic and acidic residues; sequence IAQKEPEKNVEDAGKDEG. Over residues 336-349 the composition is skewed to low complexity; it reads ASTASTGGEAGTKT. Basic and acidic residues predominate over residues 350 to 359; it reads IDSKKDDAND.

This sequence belongs to the Lgt family.

Its subcellular location is the cell membrane. The catalysed reaction is L-cysteinyl-[prolipoprotein] + a 1,2-diacyl-sn-glycero-3-phospho-(1'-sn-glycerol) = an S-1,2-diacyl-sn-glyceryl-L-cysteinyl-[prolipoprotein] + sn-glycerol 1-phosphate + H(+). It participates in protein modification; lipoprotein biosynthesis (diacylglyceryl transfer). Functionally, catalyzes the transfer of the diacylglyceryl group from phosphatidylglycerol to the sulfhydryl group of the N-terminal cysteine of a prolipoprotein, the first step in the formation of mature lipoproteins. This chain is Phosphatidylglycerol--prolipoprotein diacylglyceryl transferase, found in Rhodococcus jostii (strain RHA1).